Consider the following 215-residue polypeptide: Probable transaldolase (215 aa).

The active-site Schiff-base intermediate with substrate is the Lys83.

This sequence belongs to the transaldolase family. Type 3B subfamily.

It is found in the cytoplasm. The enzyme catalyses D-sedoheptulose 7-phosphate + D-glyceraldehyde 3-phosphate = D-erythrose 4-phosphate + beta-D-fructose 6-phosphate. The protein operates within carbohydrate degradation; pentose phosphate pathway; D-glyceraldehyde 3-phosphate and beta-D-fructose 6-phosphate from D-ribose 5-phosphate and D-xylulose 5-phosphate (non-oxidative stage): step 2/3. Transaldolase is important for the balance of metabolites in the pentose-phosphate pathway. In Moorella thermoacetica (strain ATCC 39073 / JCM 9320), this protein is Probable transaldolase.